We begin with the raw amino-acid sequence, 412 residues long: Phosphoglycerate kinase 1 (412 aa).

Substrate-binding positions include 28–30 (DFN), 65–68 (HQGR), Arg122, and Arg162. ATP is bound by residues Glu336 and 361–364 (GGHT).

Belongs to the phosphoglycerate kinase family. As to quaternary structure, monomer.

The protein localises to the cytoplasm. The catalysed reaction is (2R)-3-phosphoglycerate + ATP = (2R)-3-phospho-glyceroyl phosphate + ADP. Its pathway is carbohydrate degradation; glycolysis; pyruvate from D-glyceraldehyde 3-phosphate: step 2/5. The protein is Phosphoglycerate kinase 1 of Methanosarcina acetivorans (strain ATCC 35395 / DSM 2834 / JCM 12185 / C2A).